We begin with the raw amino-acid sequence, 732 residues long: MTKAQFYIEGMTCSACSSGIERALGRKKFVQEVGVDLISKKAFVVYDENQASLEDVFKQIEKLGYQPRVATDTPNTFLNPSFLTPNVKLALVLLGTLGVLALSMFAPLLPLPSFLKNPFINGIVQLVLSLMVMHMGRNFYVHGFKALWARQPNMDSLIALGTSAALLYSLVLLFRAYTHAPIEGYYFESVCVILLFVMAGKRVEENSKDKALEAMQSLMRHQSLNALKIENGQSVEVPLESLQKGDILQILPGSYIPVDGVLFKGEAEVDESMLSGESLPVYKKEGMDLFAGTLNTTTTFQMRATHTKAQSTLAKILTLIAKAQGSKAPIARLADKVAGVFVPIVIGIASIAFLVWLVLGDFTRALEVFIAILVISCPCALGLATPMALLVAQKEASLLGLFFKDAVSLEKAKNVNHVIFDKTGTLTLGTPLVQEVRVAEGVDRLELLTLCASLEAQSEHVIAKGIVAHAKEQGIALQEVQEVQAKPGFGIKGVVGDQIIKAGNLEFFNLPNPFGTLEGIQVFVGTETQILGVVVLADSLKEGSKEAISELKALGVKTTLLSGDNLENVRALATQLGIQDYHAQAKPEDKLKVIQELKAQGKVVMMVGDGVNDAPSLALSDVGVVMAKGSDASLEVADVVSFNNDIQSVVSAMKLSALTIANIKQNLFWAFCYNSIAIPLACGVAYKLGIMFNPMLASLAMSLSSVSVVLNAQRLRGAHFKIRGSHENRHSS.

Over 1–88 (MTKAQFYIEG…NPSFLTPNVK (88 aa)) the chain is Cytoplasmic. One can recognise an HMA domain in the interval 2-68 (TKAQFYIEGM…QIEKLGYQPR (67 aa)). Positions 13 and 16 each coordinate Cu(+). A helical membrane pass occupies residues 89–109 (LALVLLGTLGVLALSMFAPLL). Residues 110–122 (PLPSFLKNPFING) are Extracellular-facing. A helical membrane pass occupies residues 123–142 (IVQLVLSLMVMHMGRNFYVH). The Cytoplasmic segment spans residues 143–149 (GFKALWA). A helical transmembrane segment spans residues 150–170 (RQPNMDSLIALGTSAALLYSL). Over 171-187 (VLLFRAYTHAPIEGYYF) the chain is Extracellular. Residues 188–208 (ESVCVILLFVMAGKRVEENSK) form a helical membrane-spanning segment. Residues 209 to 336 (DKALEAMQSL…KAPIARLADK (128 aa)) are Cytoplasmic-facing. A helical membrane pass occupies residues 337 to 359 (VAGVFVPIVIGIASIAFLVWLVL). Topologically, residues 360-365 (GDFTRA) are extracellular. The helical transmembrane segment at 366–383 (LEVFIAILVISCPCALGL) threads the bilayer. At 384–663 (ATPMALLVAQ…KLSALTIANI (280 aa)) the chain is on the cytoplasmic side. Residue aspartate 421 is the 4-aspartylphosphate intermediate of the active site. Positions 609 and 613 each coordinate Mg(2+). The chain crosses the membrane as a helical span at residues 664–683 (KQNLFWAFCYNSIAIPLACG). Topologically, residues 684–694 (VAYKLGIMFNP) are extracellular. The helical transmembrane segment at 695–713 (MLASLAMSLSSVSVVLNAQ) threads the bilayer. Residues 714 to 732 (RLRGAHFKIRGSHENRHSS) are Cytoplasmic-facing.

This sequence belongs to the cation transport ATPase (P-type) (TC 3.A.3) family. Type IB subfamily.

It is found in the cell membrane. It carries out the reaction Cu(+)(in) + ATP + H2O = Cu(+)(out) + ADP + phosphate + H(+). Its function is as follows. Probably involved in copper export. This Helicobacter felis (strain ATCC 49179 / CCUG 28539 / NCTC 12436 / CS1) protein is Copper-transporting ATPase (copA).